We begin with the raw amino-acid sequence, 172 residues long: Cytidylate kinase (172 aa).

Residue 7–15 (GLAGTGTTT) participates in ATP binding.

Belongs to the cytidylate kinase family. Type 2 subfamily.

The protein resides in the cytoplasm. It catalyses the reaction CMP + ATP = CDP + ADP. It carries out the reaction dCMP + ATP = dCDP + ADP. The chain is Cytidylate kinase from Methanobrevibacter smithii (strain ATCC 35061 / DSM 861 / OCM 144 / PS).